A 642-amino-acid polypeptide reads, in one-letter code: Capsid vertex component 2 (642 aa).

An interaction with major capsid protein/MCP region spans residues 1 to 48; sequence MSLLHTFWRLPVAVFFEPHEENVLRCPERVLRRLLEDAAVTMRGGGWR. Positions 97-125 are disordered; it reads DEGPSPRTLLQPPCRPRSSSPGTGVAGAS.

The protein belongs to the herpesviridae CVC2 protein family. In terms of assembly, heterodimerizes with CVC1. Interacts with major capsid protein/MCP and triplex capsid protein 1/TRX1 at the pentamer vertices. Interacts with the large tegument protein/LTP.

It is found in the virion. The protein resides in the host nucleus. Its function is as follows. Capsid vertex-specific component that plays a role during viral DNA encapsidation, assuring correct genome cleavage and presumably stabilizing capsids that contain full-length viral genomes. Participates in the interaction between the capsid and the tegument through interaction with the large tegument protein/LTP. The protein is Capsid vertex component 2 of Homo sapiens (Human).